The following is a 353-amino-acid chain: Photosystem II protein D1 (353 aa).

The residue at position 2 (Thr2) is an N-acetylthreonine. Thr2 carries the post-translational modification Phosphothreonine. 3 helical membrane passes run 29 to 46, 118 to 133, and 142 to 156; these read YIGW…TATS, HFLL…EWEL, and WIAV…AATA. Position 118 (His118) interacts with chlorophyll a. Residue Tyr126 coordinates pheophytin a. Asp170 and Glu189 together coordinate [CaMn4O5] cluster. The chain crosses the membrane as a helical span at residues 197-218; the sequence is FHMLGVAGVFGGSLFSAMHGSL. Residue His198 coordinates chlorophyll a. A quinone contacts are provided by residues His215 and 264-265; that span reads SF. His215 contacts Fe cation. His272 contributes to the Fe cation binding site. Residues 274–288 form a helical membrane-spanning segment; the sequence is FLTAWPVVGIWFTAL. His332, Glu333, Asp342, and Ala344 together coordinate [CaMn4O5] cluster. Positions 345 to 353 are excised as a propeptide; sequence AVEAPSTNG.

Belongs to the reaction center PufL/M/PsbA/D family. In terms of assembly, PSII is composed of 1 copy each of membrane proteins PsbA, PsbB, PsbC, PsbD, PsbE, PsbF, PsbH, PsbI, PsbJ, PsbK, PsbL, PsbM, PsbT, PsbX, PsbY, PsbZ, Psb30/Ycf12, at least 3 peripheral proteins of the oxygen-evolving complex and a large number of cofactors. It forms dimeric complexes. The D1/D2 heterodimer binds P680, chlorophylls that are the primary electron donor of PSII, and subsequent electron acceptors. It shares a non-heme iron and each subunit binds pheophytin, quinone, additional chlorophylls, carotenoids and lipids. D1 provides most of the ligands for the Mn4-Ca-O5 cluster of the oxygen-evolving complex (OEC). There is also a Cl(-1) ion associated with D1 and D2, which is required for oxygen evolution. The PSII complex binds additional chlorophylls, carotenoids and specific lipids. is required as a cofactor. In terms of processing, tyr-161 forms a radical intermediate that is referred to as redox-active TyrZ, YZ or Y-Z. C-terminally processed by CTPA; processing is essential to allow assembly of the oxygen-evolving complex and thus photosynthetic growth.

It localises to the plastid. It is found in the chloroplast thylakoid membrane. It carries out the reaction 2 a plastoquinone + 4 hnu + 2 H2O = 2 a plastoquinol + O2. In terms of biological role, photosystem II (PSII) is a light-driven water:plastoquinone oxidoreductase that uses light energy to abstract electrons from H(2)O, generating O(2) and a proton gradient subsequently used for ATP formation. It consists of a core antenna complex that captures photons, and an electron transfer chain that converts photonic excitation into a charge separation. The D1/D2 (PsbA/PsbD) reaction center heterodimer binds P680, the primary electron donor of PSII as well as several subsequent electron acceptors. In Barbarea verna (Land cress), this protein is Photosystem II protein D1.